A 419-amino-acid chain; its full sequence is Ribosome biogenesis protein WDR12 homolog (419 aa).

Positions 10-91 (VQVHLKTKQE…EDAIDIEYVE (82 aa)) are ubiquitin-like (UBL) domain. WD repeat units follow at residues 103 to 140 (LHDD…KLTI), 142 to 184 (GHTA…NAVE), 191 to 230 (GHER…TSEG), 249 to 287 (GHRE…IKTE), 289 to 328 (STNK…GSVV), 334 to 374 (GHNA…APLY), and 378 to 416 (GHGE…IENM).

Belongs to the WD repeat WDR12/YTM1 family.

The protein localises to the nucleus. The protein resides in the nucleolus. It is found in the nucleoplasm. Required for maturation of ribosomal RNAs and formation of the large ribosomal subunit. The polypeptide is Ribosome biogenesis protein WDR12 homolog (Drosophila virilis (Fruit fly)).